The primary structure comprises 227 residues: Cytochrome c oxidase subunit 2 (227 aa).

Residues 1–14 (MAYPFQLGLQDATS) are Mitochondrial intermembrane-facing. The chain crosses the membrane as a helical span at residues 15–45 (PIMEELLHFHDHTLMIVFLISSLVLYIITLM). Residues 46-59 (LTTKLTHTSTMDAQ) lie on the Mitochondrial matrix side of the membrane. A helical membrane pass occupies residues 60–87 (EVETVWTILPAIILILIALPSLRILYMM). The Mitochondrial intermembrane portion of the chain corresponds to 88 to 227 (DEINNPSLTV…YFETWSAVMV (140 aa)). Cu cation contacts are provided by His161, Cys196, Glu198, Cys200, His204, and Met207. Glu198 contributes to the Mg(2+) binding site. Phosphotyrosine is present on Tyr218.

It belongs to the cytochrome c oxidase subunit 2 family. As to quaternary structure, component of the cytochrome c oxidase (complex IV, CIV), a multisubunit enzyme composed of 14 subunits. The complex is composed of a catalytic core of 3 subunits MT-CO1, MT-CO2 and MT-CO3, encoded in the mitochondrial DNA, and 11 supernumerary subunits COX4I, COX5A, COX5B, COX6A, COX6B, COX6C, COX7A, COX7B, COX7C, COX8 and NDUFA4, which are encoded in the nuclear genome. The complex exists as a monomer or a dimer and forms supercomplexes (SCs) in the inner mitochondrial membrane with NADH-ubiquinone oxidoreductase (complex I, CI) and ubiquinol-cytochrome c oxidoreductase (cytochrome b-c1 complex, complex III, CIII), resulting in different assemblies (supercomplex SCI(1)III(2)IV(1) and megacomplex MCI(2)III(2)IV(2)). Found in a complex with TMEM177, COA6, COX18, COX20, SCO1 and SCO2. Interacts with TMEM177 in a COX20-dependent manner. Interacts with COX20. Interacts with COX16. It depends on Cu cation as a cofactor.

Its subcellular location is the mitochondrion inner membrane. The catalysed reaction is 4 Fe(II)-[cytochrome c] + O2 + 8 H(+)(in) = 4 Fe(III)-[cytochrome c] + 2 H2O + 4 H(+)(out). Its function is as follows. Component of the cytochrome c oxidase, the last enzyme in the mitochondrial electron transport chain which drives oxidative phosphorylation. The respiratory chain contains 3 multisubunit complexes succinate dehydrogenase (complex II, CII), ubiquinol-cytochrome c oxidoreductase (cytochrome b-c1 complex, complex III, CIII) and cytochrome c oxidase (complex IV, CIV), that cooperate to transfer electrons derived from NADH and succinate to molecular oxygen, creating an electrochemical gradient over the inner membrane that drives transmembrane transport and the ATP synthase. Cytochrome c oxidase is the component of the respiratory chain that catalyzes the reduction of oxygen to water. Electrons originating from reduced cytochrome c in the intermembrane space (IMS) are transferred via the dinuclear copper A center (CU(A)) of subunit 2 and heme A of subunit 1 to the active site in subunit 1, a binuclear center (BNC) formed by heme A3 and copper B (CU(B)). The BNC reduces molecular oxygen to 2 water molecules using 4 electrons from cytochrome c in the IMS and 4 protons from the mitochondrial matrix. This Vulpes vulpes (Red fox) protein is Cytochrome c oxidase subunit 2 (MT-CO2).